The primary structure comprises 1544 residues: Lysine-specific demethylase 5B (1544 aa).

One can recognise a JmjN domain in the interval 32-73; sequence CPVFEPSWEEFADPFAFIHKIRPIAEQTGICKVRPPPDWQPP. Positions 97-187 constitute an ARID domain; the sequence is TRVKLNFLDQ…ILNPYNLFLS (91 aa). Residues K148, K204, K209, K242, K274, and K278 each participate in a glycyl lysine isopeptide (Lys-Gly) (interchain with G-Cter in SUMO2) cross-link. Positions 201–230 are disordered; sequence TDTKDKEYKPHDIPQRQSVQPSETCPPARR. Residues 202–214 are compositionally biased toward basic and acidic residues; it reads DTKDKEYKPHDIP. Residues 309–359 form a PHD-type 1 zinc finger; that stretch reads LYVCLLCGSGNDEDRLLLCDGCDDSYHTFCLIPPLHDVPKGDWRCPKCLAQ. Y425 contacts 2-oxoglutarate. A JmjC domain is found at 453-619; that stretch reads EYLDSGWNLN…LGRQCVEHYR (167 aa). Fe cation-binding residues include H499 and E501. 2-oxoglutarate contacts are provided by S507, N509, and K517. H587 is a Fe cation binding site. A C5HC2 zinc finger spans residues 692 to 744; it reads CVKCKTTCFMSAISCSCKPGLLVCLHHVKELCSCPPYKYKLRYRYTLDDLYPM. Residue K769 forms a Glycyl lysine isopeptide (Lys-Gly) (interchain with G-Cter in SUMO2) linkage. K832 carries the N6-acetyllysine modification. S986 is modified (phosphoserine). The PHD-type 2 zinc-finger motif lies at 1176 to 1224; the sequence is IKICLCQKAPAAPMIQCELCRDAFHTSCVAVPSISQGLRIWLCPHCRRS. Position 1328 is a phosphoserine (S1328). A disordered region spans residues 1374 to 1400; it reads PSPAQQTDRSSPVRPSSEKNDCCRGKR. A compositionally biased stretch (polar residues) spans 1376–1387; the sequence is PAQQTDRSSPVR. The span at 1389–1400 shows a compositional bias: basic and acidic residues; sequence SSEKNDCCRGKR. A Glycyl lysine isopeptide (Lys-Gly) (interchain with G-Cter in SUMO2) cross-link involves residue K1450. S1456 bears the Phosphoserine mark. A PHD-type 3 zinc finger spans residues 1484–1538; the sequence is DAICPAVSCLQPEGDEVDWVQCDGSCNQWFHQVCVGVSPEMAEKEDYICVRCTVK.

Belongs to the JARID1 histone demethylase family. Interacts with FOXG1B, PAX9, MYC, MYCN and RB1. Interacts with HDAC1, HDAC4, HDAC5 and HDAC7. Interacts (via PHD-type 1 zinc finger) with histone H3 unmodified at 'Lys-4'; the interaction is inhibited when histone H3 is methylated at 'Arg-2' or 'Lys-4'. Fe(2+) serves as cofactor. In terms of tissue distribution, ubiquitously expressed, with highest levels in testis. Down-regulated in melanoma and glioblastoma. Up-regulated in breast cancer (at protein level).

The protein localises to the nucleus. It carries out the reaction N(6),N(6),N(6)-trimethyl-L-lysyl(4)-[histone H3] + 3 2-oxoglutarate + 3 O2 = L-lysyl(4)-[histone H3] + 3 formaldehyde + 3 succinate + 3 CO2. With respect to regulation, several specific inhibitors are being developed and tested. The inhibitor KDOAM-25 inhibits its demethylase activity, resulting to cell cycle arrest in myeloma cells. In terms of biological role, histone demethylase that demethylates 'Lys-4' of histone H3, thereby playing a central role in histone code. Does not demethylate histone H3 'Lys-9' or H3 'Lys-27'. Demethylates trimethylated, dimethylated and monomethylated H3 'Lys-4'. Acts as a transcriptional corepressor for FOXG1B and PAX9. Favors the proliferation of breast cancer cells by repressing tumor suppressor genes such as BRCA1 and HOXA5. In contrast, may act as a tumor suppressor for melanoma. Represses the CLOCK-BMAL1 heterodimer-mediated transcriptional activation of the core clock component PER2. The chain is Lysine-specific demethylase 5B (KDM5B) from Homo sapiens (Human).